We begin with the raw amino-acid sequence, 113 residues long: uncharacterized protein (113 aa).

The protein resides in the cytoplasm. Its subcellular location is the nucleus. This is an uncharacterized protein from Saccharomyces cerevisiae (strain ATCC 204508 / S288c) (Baker's yeast).